Consider the following 40-residue polypeptide: Alpha-conotoxin-like Lp1.6b (40 aa).

Residues 1–23 (VVLGPASDGRNAAANNKASDLIR) constitute a propeptide that is removed on maturation. The residue at position 24 (Gln-24) is a Pyrrolidone carboxylic acid. 2 disulfides stabilise this stretch: Cys-26/Cys-32 and Cys-27/Cys-39.

The protein belongs to the conotoxin A superfamily. As to expression, expressed by the venom duct.

The protein localises to the secreted. Alpha-conotoxins act on postsynaptic membranes, they bind to the nicotinic acetylcholine receptors (nAChR) and thus inhibit them. This chain is Alpha-conotoxin-like Lp1.6b, found in Conus leopardus (Leopard cone).